Consider the following 463-residue polypeptide: ATP-dependent protease ATPase subunit HslU (463 aa).

Residues Ile-19, 61–66 (GVGKTE), Asp-277, Glu-341, and Arg-413 contribute to the ATP site.

The protein belongs to the ClpX chaperone family. HslU subfamily. A double ring-shaped homohexamer of HslV is capped on each side by a ring-shaped HslU homohexamer. The assembly of the HslU/HslV complex is dependent on binding of ATP.

It is found in the cytoplasm. ATPase subunit of a proteasome-like degradation complex; this subunit has chaperone activity. The binding of ATP and its subsequent hydrolysis by HslU are essential for unfolding of protein substrates subsequently hydrolyzed by HslV. HslU recognizes the N-terminal part of its protein substrates and unfolds these before they are guided to HslV for hydrolysis. The sequence is that of ATP-dependent protease ATPase subunit HslU from Bacillus cereus (strain ATCC 14579 / DSM 31 / CCUG 7414 / JCM 2152 / NBRC 15305 / NCIMB 9373 / NCTC 2599 / NRRL B-3711).